Reading from the N-terminus, the 815-residue chain is DNA topoisomerase 1 (815 aa).

A Toprim domain is found at 3–119 (KHLLIVESPA…QRIVFTEITP (117 aa)). The Mg(2+) site is built by E9 and D82. Residues 133–573 (ASDLVDAQQA…KFWVPFKELV (441 aa)) enclose the Topo IA-type catalytic domain. The segment at 167 to 172 (SAGRVQ) is interaction with DNA. The active-site O-(5'-phospho-DNA)-tyrosine intermediate is the Y308. The disordered stretch occupies residues 759-815 (TGKPARKNFSTKKTATKNETRKQTTKKRTTDAKATKKVSDKPVKKQIKKRIAPNITQ). Residues 774–801 (TKNETRKQTTKKRTTDAKATKKVSDKPV) show a composition bias toward basic and acidic residues.

The protein belongs to the type IA topoisomerase family. As to quaternary structure, monomer. Mg(2+) is required as a cofactor.

It carries out the reaction ATP-independent breakage of single-stranded DNA, followed by passage and rejoining.. Releases the supercoiling and torsional tension of DNA, which is introduced during the DNA replication and transcription, by transiently cleaving and rejoining one strand of the DNA duplex. Introduces a single-strand break via transesterification at a target site in duplex DNA. The scissile phosphodiester is attacked by the catalytic tyrosine of the enzyme, resulting in the formation of a DNA-(5'-phosphotyrosyl)-enzyme intermediate and the expulsion of a 3'-OH DNA strand. The free DNA strand then undergoes passage around the unbroken strand, thus removing DNA supercoils. Finally, in the religation step, the DNA 3'-OH attacks the covalent intermediate to expel the active-site tyrosine and restore the DNA phosphodiester backbone. This is DNA topoisomerase 1 from Xylella fastidiosa (strain Temecula1 / ATCC 700964).